The chain runs to 163 residues: MTRKQRRLVFIGTCGAVLAVALGLVLWAMSGTIVFFRSPSEIAREAVAPGVRFRLGGLVEAGSVVRGPDSQVTFAVTDNAARLPVRYRGLLPDLFREGQGVVAEGAMEPGGVFRADTVLAKHDETYMPREVADALKKSGRWQEGAGHPAPAPPRTASGEARAP.

Residues 1–7 are Cytoplasmic-facing; sequence MTRKQRR. A helical; Signal-anchor for type II membrane protein transmembrane segment spans residues 8–28; the sequence is LVFIGTCGAVLAVALGLVLWA. Residues 29 to 163 are Periplasmic-facing; the sequence is MSGTIVFFRS…RTASGEARAP (135 aa). Heme is bound by residues His-122 and Tyr-126. The tract at residues 134–163 is disordered; it reads ALKKSGRWQEGAGHPAPAPPRTASGEARAP.

This sequence belongs to the CcmE/CycJ family.

The protein localises to the cell inner membrane. Heme chaperone required for the biogenesis of c-type cytochromes. Transiently binds heme delivered by CcmC and transfers the heme to apo-cytochromes in a process facilitated by CcmF and CcmH. The polypeptide is Cytochrome c-type biogenesis protein CcmE (Methylobacterium sp. (strain 4-46)).